Consider the following 376-residue polypeptide: Putative F-box protein At2g33200 (376 aa).

The F-box domain occupies 6–53; the sequence is YDWSKLCHDILRLILESLHYKDYHRARTVCSNWYTASTTCKRPLYPWR.

The polypeptide is Putative F-box protein At2g33200 (Arabidopsis thaliana (Mouse-ear cress)).